We begin with the raw amino-acid sequence, 866 residues long: Probable beta-glucosidase F (866 aa).

Residues 1–20 form the signal peptide; it reads MAAFPAYLALLSYLVPGALS. 3 N-linked (GlcNAc...) asparagine glycosylation sites follow: N65, N73, and N257. D285 is an active-site residue. N328, N360, N395, N421, N474, N659, N664, and N724 each carry an N-linked (GlcNAc...) asparagine glycan. The disordered stretch occupies residues 725–748; the sequence is SSKTYPYPDGYTTEPKPAPRAGGA.

Belongs to the glycosyl hydrolase 3 family.

The protein localises to the secreted. It carries out the reaction Hydrolysis of terminal, non-reducing beta-D-glucosyl residues with release of beta-D-glucose.. The protein operates within glycan metabolism; cellulose degradation. Its function is as follows. Beta-glucosidases are one of a number of cellulolytic enzymes involved in the degradation of cellulosic biomass. Catalyzes the last step releasing glucose from the inhibitory cellobiose. This is Probable beta-glucosidase F (bglF) from Aspergillus oryzae (strain ATCC 42149 / RIB 40) (Yellow koji mold).